Here is a 274-residue protein sequence, read N- to C-terminus: SWI/SNF chromatin-remodeling complex subunit snf30 (274 aa).

2 stretches are compositionally biased toward polar residues: residues 123–150 and 157–167; these read TLSY…GTMQ and PSLTRSDSVSS. The disordered stretch occupies residues 123-167; it reads TLSYPPSNGDSSSYANGTDLHGNTGTMQQEEKANPSLTRSDSVSS.

As to quaternary structure, component of the SWI/SNF global transcription activator complex composed of at least arp9, arp42, snf5, snf22, snf30, sbf59, sol1, ssr1, ssr2, ssr3, ssr4 and tfg3.

The protein localises to the cytoplasm. It localises to the nucleus. Functionally, component of the SWI/SNF complex, an ATP-dependent chromatin remodeling complex, required for the positive and negative regulation of gene expression of a large number of genes. It changes chromatin structure by altering DNA-histone contacts within a nucleosome, leading eventually to a change in nucleosome position, thus facilitating or repressing binding of gene-specific transcription factors. This is SWI/SNF chromatin-remodeling complex subunit snf30 (snf30) from Schizosaccharomyces pombe (strain 972 / ATCC 24843) (Fission yeast).